Here is a 147-residue protein sequence, read N- to C-terminus: Protein archease (147 aa).

The Ca(2+) site is built by Asp17, Asp146, and Val147.

Belongs to the archease family.

Functionally, activates the tRNA-splicing ligase complex by facilitating the enzymatic turnover of catalytic subunit RtcB. Acts by promoting the guanylylation of RtcB, a key intermediate step in tRNA ligation. Can also alter the NTP specificity of RtcB such that ATP, dGTP or ITP is used efficiently. The sequence is that of Protein archease from Pyrobaculum islandicum (strain DSM 4184 / JCM 9189 / GEO3).